A 472-amino-acid chain; its full sequence is TBC domain-containing protein C23D3.03c (472 aa).

The Rab-GAP TBC domain maps to 215 to 418 (GIPSRVRGRV…RILDCYVFEE (204 aa)).

This is TBC domain-containing protein C23D3.03c from Schizosaccharomyces pombe (strain 972 / ATCC 24843) (Fission yeast).